Reading from the N-terminus, the 445-residue chain is MTTILPNLPVGQKVGIAFSGGLDTSAALLWMRNKGAIPYAYTANLGQPDEDDYDAIPRRAMEYGAENARLIDCRAQLVAEGIAALQAGAFHVSTAGITYFNTTPIGRAVTGTMLVAAMKEDGVNIWGDGSTYKGNDIERFYRYGLLTNPDLKIYKPWLDQLFIDELGGRAEMSEYMRQAGFDYKMSAEKAYSTDSNMLGATHEAKDLEQLNSGIRIVKPIMGVAFWRDDVAVKAEEVSVRFEEGQPVALNGVEYADPVELMLEANRIGGRHGLGMSDQIENRIIEAKSRGIYEAPGLALLFIAYERLVTGIHNEDTIEQYRESGRKLGRLLYQGRWFDPQAIMLRETAQRWVARAVTGEVTLELRRGNDYSLLNTESPNLTYAPERLSMEKVENAPFTPADRIGQLTMRNLDITDTRDKLFTYVKTGLLASSGGAALPQLKDAKK.

ATP is bound by residues 17–25 and Ala-43; that span reads AFSGGLDTS. Position 99 (Tyr-99) interacts with L-citrulline. Residues Gly-129 and Thr-131 each coordinate ATP. 3 residues coordinate L-aspartate: Thr-131, Asn-135, and Asp-136. Asn-135 is a binding site for L-citrulline. An ATP-binding site is contributed by Asp-136. L-citrulline contacts are provided by Arg-139 and Ser-192. ATP is bound at residue Asp-194. L-citrulline is bound by residues Thr-201, Glu-203, and Glu-280.

The protein belongs to the argininosuccinate synthase family. Type 2 subfamily. As to quaternary structure, homotetramer.

Its subcellular location is the cytoplasm. It catalyses the reaction L-citrulline + L-aspartate + ATP = 2-(N(omega)-L-arginino)succinate + AMP + diphosphate + H(+). The protein operates within amino-acid biosynthesis; L-arginine biosynthesis; L-arginine from L-ornithine and carbamoyl phosphate: step 2/3. This chain is Argininosuccinate synthase, found in Bordetella petrii (strain ATCC BAA-461 / DSM 12804 / CCUG 43448).